The chain runs to 211 residues: MPTQAANEALAILRDASQFQWYVITLLLVVIYIYASEIHQKNYRAVFAGLAFWGMDWFNEIWNALVFHFTNYAAVWMAPGKTAYLILIGLNIEISMMFAIMGVAATKLLPEDRKAKIFGINNRIFYAIVLSAACVVVEIILNAANVLVWEYWWWNAKMPLLIFLIGYLPFFLVAYWVYDMDLVEKQAAVSFGILAIDAVLLIVFAGLMEWI.

6 helical membrane-spanning segments follow: residues 21 to 38 (WYVI…ASEI), 53 to 75 (WGMD…YAAV), 82 to 104 (TAYL…MGVA), 124 to 146 (IFYA…AANV), 159 to 178 (PLLI…YWVY), and 188 to 210 (AVSF…LMEW).

It is found in the cell membrane. This is an uncharacterized protein from Archaeoglobus fulgidus (strain ATCC 49558 / DSM 4304 / JCM 9628 / NBRC 100126 / VC-16).